A 962-amino-acid chain; its full sequence is Glycine dehydrogenase (decarboxylating) (962 aa).

Position 710 is an N6-(pyridoxal phosphate)lysine (K710).

This sequence belongs to the GcvP family. As to quaternary structure, the glycine cleavage system is composed of four proteins: P, T, L and H. It depends on pyridoxal 5'-phosphate as a cofactor.

The catalysed reaction is N(6)-[(R)-lipoyl]-L-lysyl-[glycine-cleavage complex H protein] + glycine + H(+) = N(6)-[(R)-S(8)-aminomethyldihydrolipoyl]-L-lysyl-[glycine-cleavage complex H protein] + CO2. The glycine cleavage system catalyzes the degradation of glycine. The P protein binds the alpha-amino group of glycine through its pyridoxal phosphate cofactor; CO(2) is released and the remaining methylamine moiety is then transferred to the lipoamide cofactor of the H protein. The sequence is that of Glycine dehydrogenase (decarboxylating) from Idiomarina loihiensis (strain ATCC BAA-735 / DSM 15497 / L2-TR).